A 328-amino-acid polypeptide reads, in one-letter code: Malate dehydrogenase (328 aa).

16-22 (GAAGQIS) is a binding site for NAD(+). Substrate contacts are provided by arginine 97 and arginine 103. NAD(+)-binding positions include asparagine 110, glutamine 117, and 134-136 (VGN). Substrate contacts are provided by asparagine 136 and arginine 167. The active-site Proton acceptor is histidine 192.

It belongs to the LDH/MDH superfamily. MDH type 2 family.

It carries out the reaction (S)-malate + NAD(+) = oxaloacetate + NADH + H(+). Functionally, catalyzes the reversible oxidation of malate to oxaloacetate. The polypeptide is Malate dehydrogenase (Corynebacterium glutamicum (strain R)).